The primary structure comprises 35 residues: Entry-fusion complex protein OPG076 (35 aa).

The chain crosses the membrane as a helical span at residues 2–22 (LVVIMFFIAFAFCSWLSYSYL). The Virion surface portion of the chain corresponds to 23–35 (RPYISTKELNKSR).

This sequence belongs to the orthopoxvirus OPG076 family. Component of the entry fusion complex (EFC) composed of OPG053, OPG076, OPG086, OPG094, OPG095, OPG099, OPG107, OPG143, OPG104, OPG147 and OPG155. Except for OPG095 and OPG053, each of the EFC proteins is required for assembly or stability of the complex. In terms of processing, unglycosylated because produced in viral factories instead of the classic ER -Golgi route.

It localises to the virion membrane. Its function is as follows. Component of the entry fusion complex (EFC), which consists of 11 proteins. During cell infection, this complex mediates entry of the virion core into the host cytoplasm by a two-step mechanism consisting of lipid mixing of the viral and cellular membranes and subsequent pore formation. This chain is Entry-fusion complex protein OPG076 (OPG076), found in Vaccinia virus (strain Copenhagen) (VACV).